The sequence spans 426 residues: Putative phosphate permease TC_0064 (426 aa).

A run of 11 helical transmembrane segments spans residues 1 to 21 (MWWLLVCVVIGGFYTAWNIGA), 37 to 57 (LTLRQAVLIAAVFEFLGAVVL), 83 to 103 (VFGMTAALFATGVWLQIASFF), 104 to 124 (GWPVSTTHAIVGGVLGFGIIL), 140 to 160 (VSWLASPIIGGYFAFLIFSFI), 183 to 203 (AIIIFALGLILILSGAVARVV), 207 to 227 (VAFRVVCGLVVFAFAFTIWGV), 260 to 280 (LVVERIFAYLQIVIACFMSFA), 309 to 329 (VLFIFMSLGGLGLVFGLATWG), 365 to 385 (FGFPISTTHVVVGAVLGVGLA), and 399 to 419 (IVLSWFVTVPAGAALSIMFFL).

Belongs to the inorganic phosphate transporter (PiT) (TC 2.A.20) family.

The protein localises to the cell membrane. In terms of biological role, potential transporter for phosphate. This Chlamydia muridarum (strain MoPn / Nigg) protein is Putative phosphate permease TC_0064.